The chain runs to 316 residues: Alkaline ceramidase YPC1 (316 aa).

The Lumenal segment spans residues 1–36; the sequence is MGIFRWNYPESSVPGVWGETTSTIDWCEENYVVSPY. A disulfide bridge links cysteine 27 with cysteine 219. The stretch at 37-57 is an intramembrane region; the sequence is IAEWSNTLTNSVFILSAIYTT. Topologically, residues 58 to 68 are lumenal; sequence YSAYKNKLEKR. The stretch at 69–89 is an intramembrane region; that stretch reads FLLIGFGYGLVGVGSWLFHMT. Topologically, residues 90–93 are lumenal; it reads LKYR. A helical membrane pass occupies residues 94–114; sequence FQLLDELPMIYAMCIPTWSLV. At 115–135 the chain is on the cytoplasmic side; that stretch reads CEAKEALLNGDNHKKVPLFEQ. Residues 136 to 156 traverse the membrane as a helical segment; sequence IFIGVIIGLAVTTASILYVIY. The Lumenal portion of the chain corresponds to 157–160; that stretch reads KNVD. The stretch at 161–181 is an intramembrane region; sequence IHQILFGVQIVVVAATAGSLT. At 182 to 195 the chain is on the lumenal side; sequence YRYVHDPLAKRNLK. The stretch at 196-216 is an intramembrane region; the sequence is ASMALGAILFLSGYISWLLDI. Residues 217–228 lie on the Lumenal side of the membrane; the sequence is HYCSFWVHVRRS. The helical transmembrane segment at 229–249 threads the bilayer; that stretch reads ILALPLGVLLEPHGWWHILTG. Over 250 to 316 the chain is Cytoplasmic; that stretch reads MGIYFYIVSL…DQSIEVKKEK (67 aa).

This sequence belongs to the alkaline ceramidase family.

The protein resides in the endoplasmic reticulum membrane. The catalysed reaction is N-hexanoyl-sphinganine + H2O = hexanoate + sphinganine. It catalyses the reaction sphinganine + hexadecanoate = N-hexadecanoylsphinganine + H2O. It carries out the reaction N-hexadecanoyl-(4R)-hydroxysphinganine + H2O = (4R)-hydroxysphinganine + hexadecanoate. The enzyme catalyses N-hexadecanoylsphing-4-enine + H2O = sphing-4-enine + hexadecanoate. The catalysed reaction is an N-acyl-(4R)-4-hydroxysphinganine + H2O = (4R)-hydroxysphinganine + a fatty acid. Functionally, alkaline ceramidase that hydrolyzes phytoceramide and also dihydroceramide into phytosphingosine or dihydrosphingosine. Prefers phytoceramide. Also has reverse activity as acyl-CoA-independent ceramide synthase, catalyzing synthesis of phytoceramide and dihydroceramide from palmitic acid and phytosphingosine or dihydrosphingosine. Is not responsible for the breakdown of unsaturated ceramide. Preferentially uses very long chain fatty acids (C-24 and C-26) in vivo compared to C-16 in vitro. In Saccharomyces cerevisiae (strain ATCC 204508 / S288c) (Baker's yeast), this protein is Alkaline ceramidase YPC1 (YPC1).